Reading from the N-terminus, the 341-residue chain is Methionine import ATP-binding protein MetN 2 (341 aa).

The region spanning 2-241 (IELKEVVKEY…PQHTVTKRFV (240 aa)) is the ABC transporter domain. 38–45 (GFSGAGKS) is a binding site for ATP.

Belongs to the ABC transporter superfamily. Methionine importer (TC 3.A.1.24) family. As to quaternary structure, the complex is composed of two ATP-binding proteins (MetN), two transmembrane proteins (MetI) and a solute-binding protein (MetQ).

The protein localises to the cell membrane. It catalyses the reaction L-methionine(out) + ATP + H2O = L-methionine(in) + ADP + phosphate + H(+). The catalysed reaction is D-methionine(out) + ATP + H2O = D-methionine(in) + ADP + phosphate + H(+). Functionally, part of the ABC transporter complex MetNIQ involved in methionine import. Responsible for energy coupling to the transport system. The chain is Methionine import ATP-binding protein MetN 2 from Staphylococcus aureus (strain bovine RF122 / ET3-1).